A 122-amino-acid chain; its full sequence is Large ribosomal subunit protein uL14c (122 aa).

It belongs to the universal ribosomal protein uL14 family. Part of the 50S ribosomal subunit.

It localises to the plastid. The protein localises to the chloroplast. Binds to 23S rRNA. This is Large ribosomal subunit protein uL14c from Gnetum parvifolium (Small-leaved jointfir).